A 455-amino-acid polypeptide reads, in one-letter code: MALPNKFLLWFYCFAWLCFPVSLGSQASGGDAQIAASAELESGATPWSLLQPIDERDRAGLLPPLFKVLSVGRGGAPRLQPDSRALHYMKNLYKTYATKEGIPKSNRSHLYNTVRLFTPCTQHKQVPGDQVTGILPSVDLLFNLDRITTVEHLLKSVLLYTINNSVSFSSAVKCVCNLMIKEPKFSSKTLHRALYSFTFNSQFEFGKKHKWIEIDVTSLLQPLVASNKRSIHMSINFTCMKDQLEHPSAQNGLFNMTLLVPPSLILYLNDTSAQAYHRWYSLYYKRRPSQGPDQERSLSAYPVGEDAAEDGRSSHHRHRRGQETVSSELKKPLVPASFNLSEYFKQFLFPQNECELHDFRLSFSQLKWDNWIVAPHRYNPRYCKGDCPRAVGHRYGSPVHTMVQNIIYEKLDSSVPRPSCVPAKYSPLSVLTIEPDGSIAYKEYEDMIATKCTCR.

The signal sequence occupies residues 1–24 (MALPNKFLLWFYCFAWLCFPVSLG). A propeptide spanning residues 25–320 (SQASGGDAQI…GRSSHHRHRR (296 aa)) is cleaved from the precursor. N-linked (GlcNAc...) asparagine glycosylation is found at asparagine 106, asparagine 163, asparagine 236, asparagine 255, and asparagine 269. Positions 305–328 (EDAAEDGRSSHHRHRRGQETVSSE) are disordered. A glycan (N-linked (GlcNAc...) asparagine) is linked at asparagine 339. Intrachain disulfides connect cysteine 354-cysteine 420, cysteine 383-cysteine 452, and cysteine 387-cysteine 454.

The protein belongs to the TGF-beta family. In terms of assembly, homodimer or heterodimer (Potential). But, in contrast to other members of this family, cannot be disulfide-linked. In terms of processing, phosphorylated; phosphorylation is critical for GDF9 function.

Its subcellular location is the secreted. Required for ovarian folliculogenesis. This Papio anubis (Olive baboon) protein is Growth/differentiation factor 9 (GDF9).